A 207-amino-acid chain; its full sequence is Alpha-1-acid glycoprotein 8 (207 aa).

The N-terminal stretch at Met-1–Ala-18 is a signal peptide. Residues Asn-25, Asn-34, Asn-76, Asn-94, and Asn-104 are each glycosylated (N-linked (GlcNAc...) asparagine). An intrachain disulfide couples Cys-91 to Cys-184.

The protein belongs to the calycin superfamily. Lipocalin family. Expressed by the liver and secreted in plasma.

It is found in the secreted. Functions as a transport protein in the blood stream. Binds various ligands in the interior of its beta-barrel domain. Appears to function in modulating the activity of the immune system during the acute-phase reaction. This chain is Alpha-1-acid glycoprotein 8 (Orm8), found in Mus caroli (Ryukyu mouse).